The following is a 561-amino-acid chain: Putative transport protein YbjL (561 aa).

5 helical membrane-spanning segments follow: residues 8-28 (LLNG…LCLG), 32-52 (LGSV…LLGQ), 66-86 (FMLF…SIFF), 94-114 (MLAL…GKLF), and 158-178 (NLSL…IVGA). 2 RCK C-terminal domains span residues 200-288 (RGLD…SFRN) and 292-373 (VFDR…RIGF). 5 consecutive transmembrane segments (helical) span residues 383–403 (LLAF…TFQF), 406–426 (FSFG…LGFL), 447–467 (FGLM…ISNG), 475–495 (MLIA…LFGA), and 540–560 (AIAN…WPGL).

The protein belongs to the AAE transporter (TC 2.A.81) family. YbjL subfamily.

Its subcellular location is the cell membrane. This Salmonella agona (strain SL483) protein is Putative transport protein YbjL.